The primary structure comprises 445 residues: Vacuolar fusion protein CCZ1 homolog (445 aa).

This sequence belongs to the CCZ1 family.

In Dictyostelium discoideum (Social amoeba), this protein is Vacuolar fusion protein CCZ1 homolog.